A 172-amino-acid chain; its full sequence is Large ribosomal subunit protein uL10 (172 aa).

The protein belongs to the universal ribosomal protein uL10 family. Part of the ribosomal stalk of the 50S ribosomal subunit. The N-terminus interacts with L11 and the large rRNA to form the base of the stalk. The C-terminus forms an elongated spine to which L12 dimers bind in a sequential fashion forming a multimeric L10(L12)X complex.

In terms of biological role, forms part of the ribosomal stalk, playing a central role in the interaction of the ribosome with GTP-bound translation factors. The protein is Large ribosomal subunit protein uL10 of Idiomarina loihiensis (strain ATCC BAA-735 / DSM 15497 / L2-TR).